Consider the following 296-residue polypeptide: Nitrogenase iron protein (296 aa).

Residue 10–17 participates in ATP binding; that stretch reads GKGGIGKS. Cys-98 contacts [4Fe-4S] cluster. ADP-ribosylarginine; by dinitrogenase reductase ADP-ribosyltransferase is present on Arg-101. [4Fe-4S] cluster is bound at residue Cys-133.

It belongs to the NifH/BchL/ChlL family. As to quaternary structure, homodimer. Requires [4Fe-4S] cluster as cofactor. Post-translationally, the reversible ADP-ribosylation of Arg-101 inactivates the nitrogenase reductase and regulates nitrogenase activity.

It catalyses the reaction N2 + 8 reduced [2Fe-2S]-[ferredoxin] + 16 ATP + 16 H2O = H2 + 8 oxidized [2Fe-2S]-[ferredoxin] + 2 NH4(+) + 16 ADP + 16 phosphate + 6 H(+). Its function is as follows. The key enzymatic reactions in nitrogen fixation are catalyzed by the nitrogenase complex, which has 2 components: the iron protein and the molybdenum-iron protein. This Magnetococcus marinus (strain ATCC BAA-1437 / JCM 17883 / MC-1) protein is Nitrogenase iron protein.